The chain runs to 318 residues: Acetyl-coenzyme A carboxylase carboxyl transferase subunit alpha (318 aa).

The CoA carboxyltransferase C-terminal domain maps to 41 to 295 (HLEKKNEELT…KQRILTDLNE (255 aa)).

Belongs to the AccA family. As to quaternary structure, acetyl-CoA carboxylase is a heterohexamer composed of biotin carboxyl carrier protein (AccB), biotin carboxylase (AccC) and two subunits each of ACCase subunit alpha (AccA) and ACCase subunit beta (AccD).

The protein resides in the cytoplasm. The enzyme catalyses N(6)-carboxybiotinyl-L-lysyl-[protein] + acetyl-CoA = N(6)-biotinyl-L-lysyl-[protein] + malonyl-CoA. It functions in the pathway lipid metabolism; malonyl-CoA biosynthesis; malonyl-CoA from acetyl-CoA: step 1/1. Functionally, component of the acetyl coenzyme A carboxylase (ACC) complex. First, biotin carboxylase catalyzes the carboxylation of biotin on its carrier protein (BCCP) and then the CO(2) group is transferred by the carboxyltransferase to acetyl-CoA to form malonyl-CoA. This is Acetyl-coenzyme A carboxylase carboxyl transferase subunit alpha from Tolumonas auensis (strain DSM 9187 / NBRC 110442 / TA 4).